The sequence spans 128 residues: Small ribosomal subunit protein eS8 (128 aa).

The protein belongs to the eukaryotic ribosomal protein eS8 family. As to quaternary structure, part of the 30S ribosomal subunit.

The chain is Small ribosomal subunit protein eS8 from Metallosphaera sedula (strain ATCC 51363 / DSM 5348 / JCM 9185 / NBRC 15509 / TH2).